The sequence spans 502 residues: uncharacterized protein (502 aa).

The chain crosses the membrane as a helical span at residues 1–21 (MKIFLVILSVFFFNGCFGLAY). 2 PLD phosphodiesterase domains span residues 162–189 (IKKR…GDNY) and 396–423 (TKHS…DPRS).

Belongs to the phospholipase D family. Cardiolipin synthase subfamily.

It localises to the cell membrane. This is an uncharacterized protein from Helicobacter pylori (strain J99 / ATCC 700824) (Campylobacter pylori J99).